A 685-amino-acid polypeptide reads, in one-letter code: Kinesin-like protein KIP2 (685 aa).

Disordered regions lie at residues 11-46 (EHVG…GPAQ) and 63-101 (SRPS…SGAS). Residues 86 to 101 (GSPQSPDAPSSASGAS) are compositionally biased toward low complexity. The Kinesin motor domain occupies 113–446 (NVSVAIRIKP…VRFASRAKNI (334 aa)). ATP is bound at residue 185–192 (GMTGSGKT). Coiled coils occupy residues 464–486 (IIQN…RRSA) and 520–663 (LEVE…SALS). The tract at residues 485–510 (SAAAPSGNGSTSPLDSPGVGGTSLSE) is disordered.

The protein belongs to the TRAFAC class myosin-kinesin ATPase superfamily. Kinesin family.

It is found in the cytoplasm. It localises to the cytoskeleton. Required for assembly of the mitotic spindle. The polypeptide is Kinesin-like protein KIP2 (KIP2) (Eremothecium gossypii (strain ATCC 10895 / CBS 109.51 / FGSC 9923 / NRRL Y-1056) (Yeast)).